The chain runs to 1031 residues: Sodium/potassium-transporting ATPase subunit alpha (1031 aa).

Positions 1–33 are disordered; sequence MADPGDLESRGKADSYSVAEKKSAPKKISKKNA. Over residues 7-23 the composition is skewed to basic and acidic residues; it reads LESRGKADSYSVAEKKS. The segment covering 24 to 33 has biased composition (basic residues); the sequence is APKKISKKNA. 4 helical membrane passes run 102–123, 136–155, 297–319, and 326–354; these read MFGGFSMLLWIGAILCFFAFGI, LYLGIVLSVVVIITGCFSYY, FIHIVTGVAVFLGVSFLIISLAM, and AIIFLIGIIVANVPEGLLATVTVCLTLTA. The 4-aspartylphosphate intermediate role is filled by Asp382. Lys512 contributes to the ATP binding site. Mg(2+)-binding residues include Asp725 and Asp729. 4 helical membrane-spanning segments follow: residues 795–818, 857–882, 924–944, and 961–986; these read ISPFLMFILFGIPLPLGTITILCI, LISLAYGQIGMMQATAGFFTYFIILA, LTCQTAFFTTIVVVQWADLII, and FLNFGLFFETALAAFLQYTPGVNTGL.

This sequence belongs to the cation transport ATPase (P-type) (TC 3.A.3) family. Type IIC subfamily. As to quaternary structure, the sodium/potassium-transporting ATPase is composed of a catalytic alpha subunit, an auxiliary non-catalytic beta subunit and an additional regulatory subunit.

The protein localises to the cell membrane. The catalysed reaction is K(+)(out) + Na(+)(in) + ATP + H2O = K(+)(in) + Na(+)(out) + ADP + phosphate + H(+). With respect to regulation, this alpha subunit is resistant to ouabain. Its function is as follows. This is the catalytic component of the active enzyme, which catalyzes the hydrolysis of ATP coupled with the exchange of sodium and potassium ions across the plasma membrane. This action creates the electrochemical gradient of sodium and potassium ions, providing the energy for active transport of various nutrients. The polypeptide is Sodium/potassium-transporting ATPase subunit alpha (Hydra vulgaris (Hydra)).